Here is a 586-residue protein sequence, read N- to C-terminus: NADH-quinone oxidoreductase subunit C/D 2 (586 aa).

The interval 1 to 173 (MKWVNKGTVE…RTDPPSHDFE (173 aa)) is NADH dehydrogenase I subunit C. The interval 197 to 586 (AELVLNWGPL…LDPVVGETDR (390 aa)) is NADH dehydrogenase I subunit D.

In the N-terminal section; belongs to the complex I 30 kDa subunit family. This sequence in the C-terminal section; belongs to the complex I 49 kDa subunit family. NDH-1 is composed of 13 different subunits. Subunits NuoB, CD, E, F, and G constitute the peripheral sector of the complex.

The protein localises to the cell inner membrane. It carries out the reaction a quinone + NADH + 5 H(+)(in) = a quinol + NAD(+) + 4 H(+)(out). Functionally, NDH-1 shuttles electrons from NADH, via FMN and iron-sulfur (Fe-S) centers, to quinones in the respiratory chain. The immediate electron acceptor for the enzyme in this species is believed to be ubiquinone. Couples the redox reaction to proton translocation (for every two electrons transferred, four hydrogen ions are translocated across the cytoplasmic membrane), and thus conserves the redox energy in a proton gradient. The sequence is that of NADH-quinone oxidoreductase subunit C/D 2 (nuoC2) from Aquifex aeolicus (strain VF5).